Here is a 344-residue protein sequence, read N- to C-terminus: Trace amine-associated receptor 8c (344 aa).

Residues 1–31 are Extracellular-facing; sequence MTSNFSQPALQLCYENTNGSCIKTPYSPGPR. Asn4 and Asn18 each carry an N-linked (GlcNAc...) asparagine glycan. Cystine bridges form between Cys21–Cys185 and Cys104–Cys189. A helical transmembrane segment spans residues 32-52; sequence VILYMVYGFGAVLAVCGNLLV. Over 53-67 the chain is Cytoplasmic; sequence VISVLHFKQLHSPAN. The helical transmembrane segment at 68 to 88 threads the bilayer; it reads FLIASLASADFLVGISVMPFS. Over 89–111 the chain is Extracellular; it reads MVRSIESCWYFGDAFCSLHSCCD. A helical membrane pass occupies residues 112–132; sequence VAFCYSSALHLCFISVDRYIA. At 133–146 the chain is on the cytoplasmic side; it reads VTDPLVYPTKFTVS. The helical transmembrane segment at 147–167 threads the bilayer; that stretch reads VSGICISISWILPLVYSSAVF. At 168–195 the chain is on the extracellular side; it reads YTGISAKGIESLVSALNCVGGCQVVVNQ. Residues 196–216 traverse the membrane as a helical segment; that stretch reads DWVLISFLLFFIPTVVMIILY. The Cytoplasmic portion of the chain corresponds to 217–260; the sequence is SKIFLVAKQQAVKIETSVSGNRGESSSESHKARVAKRERKAAKT. Residues 261–281 form a helical membrane-spanning segment; the sequence is LGVTVVAFMVSWLPYTIDALV. Position 282 (Asp282) is a topological domain, extracellular. Residues 283–303 form a helical membrane-spanning segment; sequence AFMGFITPAYVYEICCWSAYY. The Cytoplasmic portion of the chain corresponds to 304–344; sequence NSAMNPLIYAFFYPWFRKAIKLILSGKILKGHSSTTNLFSE.

This sequence belongs to the G-protein coupled receptor 1 family. In terms of tissue distribution, specifically expressed in neurons of the olfactory epithelium.

The protein localises to the cell membrane. In terms of biological role, olfactory receptor specific for trace amines, such ascyclohexylamine (1-MPD). Trace amine compounds are enriched in animal body fluids and act on trace amine-associated receptors (TAARs) to elicit both intraspecific and interspecific innate behaviors. Ligand-binding causes a conformation change that triggers signaling via G(s)-class of G alpha proteins (GNAL or GNAS). This is Trace amine-associated receptor 8c from Mus musculus (Mouse).